Reading from the N-terminus, the 362-residue chain is UDP-N-acetylglucosamine--N-acetylmuramyl-(pentapeptide) pyrophosphoryl-undecaprenol N-acetylglucosamine transferase (362 aa).

UDP-N-acetyl-alpha-D-glucosamine-binding positions include 14–16, arginine 170, serine 199, and glutamine 289; that span reads TGG.

It belongs to the glycosyltransferase 28 family. MurG subfamily.

It localises to the cell inner membrane. It carries out the reaction di-trans,octa-cis-undecaprenyl diphospho-N-acetyl-alpha-D-muramoyl-L-alanyl-D-glutamyl-meso-2,6-diaminopimeloyl-D-alanyl-D-alanine + UDP-N-acetyl-alpha-D-glucosamine = di-trans,octa-cis-undecaprenyl diphospho-[N-acetyl-alpha-D-glucosaminyl-(1-&gt;4)]-N-acetyl-alpha-D-muramoyl-L-alanyl-D-glutamyl-meso-2,6-diaminopimeloyl-D-alanyl-D-alanine + UDP + H(+). It participates in cell wall biogenesis; peptidoglycan biosynthesis. In terms of biological role, cell wall formation. Catalyzes the transfer of a GlcNAc subunit on undecaprenyl-pyrophosphoryl-MurNAc-pentapeptide (lipid intermediate I) to form undecaprenyl-pyrophosphoryl-MurNAc-(pentapeptide)GlcNAc (lipid intermediate II). The polypeptide is UDP-N-acetylglucosamine--N-acetylmuramyl-(pentapeptide) pyrophosphoryl-undecaprenol N-acetylglucosamine transferase (Borrelia hermsii (strain HS1 / DAH)).